Consider the following 136-residue polypeptide: Large ribosomal subunit protein uL13 (136 aa).

The protein belongs to the universal ribosomal protein uL13 family. In terms of assembly, part of the 50S ribosomal subunit.

Functionally, this protein is one of the early assembly proteins of the 50S ribosomal subunit, although it is not seen to bind rRNA by itself. It is important during the early stages of 50S assembly. The polypeptide is Large ribosomal subunit protein uL13 (Thermoplasma volcanium (strain ATCC 51530 / DSM 4299 / JCM 9571 / NBRC 15438 / GSS1)).